The chain runs to 341 residues: Putative MAGE domain-containing protein MAGEA13P (341 aa).

Disordered stretches follow at residues 1 to 21 and 78 to 101; these read MPHSQKSRHCELEQGLQAPKE and KATPWNQSDESSRSQEKKDPGASQ. The span at 87-97 shows a compositional bias: basic and acidic residues; the sequence is ESSRSQEKKDP. The region spanning 105–304 is the MAGE domain; that stretch reads LEKKVDELVK…SSFPLLYEEA (200 aa).

The chain is Putative MAGE domain-containing protein MAGEA13P (MAGEA13P) from Homo sapiens (Human).